A 314-amino-acid polypeptide reads, in one-letter code: Homoserine kinase (314 aa).

Pro95–Ser105 provides a ligand contact to ATP.

The protein belongs to the GHMP kinase family. Homoserine kinase subfamily.

The protein localises to the cytoplasm. The enzyme catalyses L-homoserine + ATP = O-phospho-L-homoserine + ADP + H(+). It participates in amino-acid biosynthesis; L-threonine biosynthesis; L-threonine from L-aspartate: step 4/5. Catalyzes the ATP-dependent phosphorylation of L-homoserine to L-homoserine phosphate. The polypeptide is Homoserine kinase (Rhodococcus erythropolis (strain PR4 / NBRC 100887)).